The chain runs to 207 residues: Small ribosomal subunit protein uS4 (207 aa).

A compositionally biased stretch (basic and acidic residues) spans 29-38 (SDKAKFDSKP). The interval 29–54 (SDKAKFDSKPGQHGRTSGTRTSDYGL) is disordered. The segment covering 42-52 (GRTSGTRTSDY) has biased composition (polar residues). Positions 97-160 (SRLDNVVYRM…KKQTRIAEAL (64 aa)) constitute an S4 RNA-binding domain.

Belongs to the universal ribosomal protein uS4 family. As to quaternary structure, part of the 30S ribosomal subunit. Contacts protein S5. The interaction surface between S4 and S5 is involved in control of translational fidelity.

One of the primary rRNA binding proteins, it binds directly to 16S rRNA where it nucleates assembly of the body of the 30S subunit. In terms of biological role, with S5 and S12 plays an important role in translational accuracy. In Polaromonas naphthalenivorans (strain CJ2), this protein is Small ribosomal subunit protein uS4.